Consider the following 253-residue polypeptide: Type III pantothenate kinase (253 aa).

6–13 (DVGNTNTV) is an ATP binding site. Residue 103 to 106 (GADR) participates in substrate binding. Residue Asp-105 is the Proton acceptor of the active site. Asp-125 contacts K(+). ATP is bound at residue Thr-128. Thr-180 contacts substrate.

This sequence belongs to the type III pantothenate kinase family. Homodimer. NH4(+) is required as a cofactor. The cofactor is K(+).

The protein resides in the cytoplasm. It catalyses the reaction (R)-pantothenate + ATP = (R)-4'-phosphopantothenate + ADP + H(+). It functions in the pathway cofactor biosynthesis; coenzyme A biosynthesis; CoA from (R)-pantothenate: step 1/5. In terms of biological role, catalyzes the phosphorylation of pantothenate (Pan), the first step in CoA biosynthesis. The chain is Type III pantothenate kinase from Parafrankia sp. (strain EAN1pec).